A 500-amino-acid chain; its full sequence is ERAD-associated E3 ubiquitin-protein ligase HRD1 (500 aa).

Residues Met-1–Arg-3 lie on the Cytoplasmic side of the membrane. Residues Leu-4–Ser-24 form a helical membrane-spanning segment. The Lumenal portion of the chain corresponds to Ser-25–Lys-40. A helical transmembrane segment spans residues Ile-41–Val-61. Residues Lys-62–Asp-98 are Cytoplasmic-facing. Residues Phe-99–Leu-119 traverse the membrane as a helical segment. Topologically, residues Ala-120–Met-135 are lumenal. Residues Leu-136–Leu-156 form a helical membrane-spanning segment. The Cytoplasmic portion of the chain corresponds to Ser-157–Ser-170. The chain crosses the membrane as a helical span at residues Val-171–Val-191. At Lys-192–Leu-225 the chain is on the lumenal side. The helical transmembrane segment at Ser-226–Ile-246 threads the bilayer. Topologically, residues Arg-247 to Asp-500 are cytoplasmic. The RING-type; atypical zinc-finger motif lies at Cys-292 to Arg-330. Disordered regions lie at residues Asp-337–Gln-375 and Asn-398–Thr-438. Residues Val-348–Asn-358 are compositionally biased toward low complexity. Residues Asn-398 to Pro-426 show a composition bias toward polar residues.

It belongs to the HRD1 family.

It is found in the endoplasmic reticulum membrane. The enzyme catalyses S-ubiquitinyl-[E2 ubiquitin-conjugating enzyme]-L-cysteine + [acceptor protein]-L-lysine = [E2 ubiquitin-conjugating enzyme]-L-cysteine + N(6)-ubiquitinyl-[acceptor protein]-L-lysine.. It participates in protein modification; protein ubiquitination. Its function is as follows. Probable component of the HRD1 ubiquitin ligase complex that mediates the rapid degradation of misfolded endoplasmic reticulum (ER) proteins, a process called ER-associated degradation (ERAD). This Oryza sativa subsp. japonica (Rice) protein is ERAD-associated E3 ubiquitin-protein ligase HRD1.